Here is a 129-residue protein sequence, read N- to C-terminus: uncharacterized protein (129 aa).

Residues I5–T25 form a helical membrane-spanning segment.

The protein localises to the membrane. This is an uncharacterized protein from Mycoplasma pneumoniae (strain ATCC 29342 / M129 / Subtype 1) (Mycoplasmoides pneumoniae).